We begin with the raw amino-acid sequence, 674 residues long: Regulator of G-protein signaling 9 (674 aa).

Residues 30-105 (PETGVRMQNQ…PDGSLYRFQT (76 aa)) form the DEP domain. Residues 219–280 (KQTVVAVKKE…NPWITDDTQF (62 aa)) form the G protein gamma domain. The RGS domain occupies 298-413 (RWAFNFSELI…YARYLKSPIY (116 aa)). Residues 533 to 573 (SSGLEQKGECSGSMAPRGPSVTESSEASLDTSWPRSRPRAP) form a disordered region. Positions 553 to 565 (VTESSEASLDTSW) are enriched in polar residues.

As to quaternary structure, heterodimer with GNB5. Interacts with RGS7BP, leading to regulate the subcellular location of the heterodimer formed with GNB5. Component of the RGS9-1-Gbeta5 complex composed of RGS9 (RGS9-1), Gbeta5 (GNB5) and RGS9BP. Interacts with PDE6G and GNAT1. In terms of processing, retinal isoform 3 is light-dependent phosphorylated at 'Ser-478'. Phosphorylation is decreased by light exposition. Highly expressed in the caudate and putamen, lower levels found in the hypothalamus and nucleus accumbens and very low levels in cerebellum. Not expressed in globus pallidus or cingulate cortex. Isoform 2 is expressed predominantly in pineal gland and retina. Isoform 3 is expressed in retina (abundant in photoreceptors).

It localises to the membrane. Functionally, inhibits signal transduction by increasing the GTPase activity of G protein alpha subunits thereby driving them into their inactive GDP-bound form. Binds to GNAT1. Involved in phototransduction; key element in the recovery phase of visual transduction. This chain is Regulator of G-protein signaling 9 (RGS9), found in Homo sapiens (Human).